A 241-amino-acid chain; its full sequence is Small ribosomal subunit protein uS2 (241 aa).

This sequence belongs to the universal ribosomal protein uS2 family.

In Citrobacter koseri (strain ATCC BAA-895 / CDC 4225-83 / SGSC4696), this protein is Small ribosomal subunit protein uS2.